The sequence spans 165 residues: SsrA-binding protein (165 aa).

Residues 141–165 (EDRRHAIAERETKREMDREISRRRR) are disordered.

The protein belongs to the SmpB family.

The protein resides in the cytoplasm. Required for rescue of stalled ribosomes mediated by trans-translation. Binds to transfer-messenger RNA (tmRNA), required for stable association of tmRNA with ribosomes. tmRNA and SmpB together mimic tRNA shape, replacing the anticodon stem-loop with SmpB. tmRNA is encoded by the ssrA gene; the 2 termini fold to resemble tRNA(Ala) and it encodes a 'tag peptide', a short internal open reading frame. During trans-translation Ala-aminoacylated tmRNA acts like a tRNA, entering the A-site of stalled ribosomes, displacing the stalled mRNA. The ribosome then switches to translate the ORF on the tmRNA; the nascent peptide is terminated with the 'tag peptide' encoded by the tmRNA and targeted for degradation. The ribosome is freed to recommence translation, which seems to be the essential function of trans-translation. In Anaeromyxobacter sp. (strain Fw109-5), this protein is SsrA-binding protein.